Reading from the N-terminus, the 334-residue chain is Guanine nucleotide-binding protein subunit beta-like protein (334 aa).

WD repeat units follow at residues 14–55 (GHKD…DSEF), 65–104 (GHSKRINGLDVSKDGNMMVTVGSDGIGRIWDTESKKSILL), 106–145 (GHGRDVLCVSINSNDTKIVTGSVDRTMNLYNTKGDLVLKM), 152–192 (MHRG…HLQT), 215–256 (DESK…QSFD), and 257–294 (AIVPVRSIAVGETEPVIALGTDESVIIWETISSRVIAS).

The protein belongs to the WD repeat G protein beta family.

This chain is Guanine nucleotide-binding protein subunit beta-like protein, found in Encephalitozoon cuniculi (strain GB-M1) (Microsporidian parasite).